Consider the following 78-residue polypeptide: Large ribosomal subunit protein bL28 (78 aa).

Residues 1–21 are disordered; sequence MSRVCQVTGKKPMVGNNRSHA.

It belongs to the bacterial ribosomal protein bL28 family.

This Shewanella baltica (strain OS223) protein is Large ribosomal subunit protein bL28.